A 324-amino-acid polypeptide reads, in one-letter code: Putative divalent cation/proton antiporter TMEM165 (324 aa).

The signal sequence occupies residues 1–33 (MAAAAPGNGRASAPRLLLLFLVPLLWAPAAVRA). At 34–89 (GPDEDLSHRNKEPPAPAQQLQPQPVAVQGPEPARVEKIFTPAAPVHTNKEDPATQT) the chain is on the lumenal side. Residues 35-45 (PDEDLSHRNKE) show a composition bias toward basic and acidic residues. Positions 35–59 (PDEDLSHRNKEPPAPAQQLQPQPVA) are disordered. The span at 50–59 (AQQLQPQPVA) shows a compositional bias: low complexity. The helical transmembrane segment at 90-110 (NLGFIHAFVAAISVIIVSELG) threads the bilayer. The Cytoplasmic segment spans residues 111-126 (DKTFFIAAIMAMRYNR). The helical transmembrane segment at 127–147 (LTVLAGAMLALGLMTCLSVLF) threads the bilayer. The Lumenal portion of the chain corresponds to 148–151 (GYAT). Residues 152 to 172 (TVIPRVYTYYVSTVLFAIFGI) form a helical membrane-spanning segment. Topologically, residues 173–228 (RMLREGLKMSPDEGQEELEEVQAELKKKDEEFQRTKLLNGPGDVETGTSITVPQKK) are cytoplasmic. A coiled-coil region spans residues 184–211 (DEGQEELEEVQAELKKKDEEFQRTKLLN). The helical transmembrane segment at 229–249 (WLHFISPIFVQALTLTFLAEW) threads the bilayer. Residues 250–267 (GDRSQLTTIVLAAREDPY) are Lumenal-facing. The helical transmembrane segment at 268-288 (GVAVGGTVGHCLCTGLAVIGG) threads the bilayer. The Cytoplasmic segment spans residues 289–299 (RMIAQKISVRT). A helical membrane pass occupies residues 300-320 (VTIIGGIVFLAFAFSALFISP). Over 321–324 (DSGF) the chain is Lumenal.

It belongs to the GDT1 family. In terms of tissue distribution, ubiquitously expressed.

It is found in the golgi apparatus membrane. It carries out the reaction Ca(2+)(in) + n H(+)(out) = Ca(2+)(out) + n H(+)(in). The catalysed reaction is Mn(2+)(in) + n H(+)(out) = Mn(2+)(out) + n H(+)(in). Its function is as follows. Putative divalent cation:proton antiporter that exchanges calcium or manganese ions for protons across the Golgi membrane. Mediates the reversible transport of calcium or manganese to the Golgi lumen driven by the proton gradient and possibly the membrane potential generated by V-ATPase. Provides calcium or manganese cofactors to resident Golgi enzymes and contributes to the maintenance of an acidic luminal Golgi pH required for proper functioning of the secretory pathway. Promotes Ca(2+) storage within the Golgi lumen of the mammary epithelial cells to be then secreted into milk. The transport mechanism and stoichiometry remains to be elucidated. This chain is Putative divalent cation/proton antiporter TMEM165, found in Homo sapiens (Human).